The primary structure comprises 242 residues: DNA repair protein RecO (242 aa).

It belongs to the RecO family.

In terms of biological role, involved in DNA repair and RecF pathway recombination. The polypeptide is DNA repair protein RecO (Nitrosospira multiformis (strain ATCC 25196 / NCIMB 11849 / C 71)).